The following is a 463-amino-acid chain: tRNA-splicing endonuclease subunit Sen2 (463 aa).

Ser-32 and Ser-147 each carry phosphoserine. The segment at His-120 to His-213 is disordered. 2 stretches are compositionally biased toward basic and acidic residues: residues Pro-139 to Gln-149 and Ser-159 to Leu-170. Catalysis depends on residues Tyr-367 and His-375. A phosphoserine mark is found at Ser-406, Ser-409, and Ser-413. Lys-414 is an active-site residue.

It belongs to the tRNA-intron endonuclease family. In terms of assembly, tRNA splicing endonuclease is a heterotetramer composed of TSEN2, TSEN15, TSEN34/LENG5 and TSEN54. tRNA splicing endonuclease complex also contains proteins of the pre-mRNA 3'-end processing machinery such as CLP1, CPSF1, CPSF4 and CSTF2.

It localises to the nucleus. It is found in the nucleolus. It catalyses the reaction pretRNA = a 3'-half-tRNA molecule with a 5'-OH end + a 5'-half-tRNA molecule with a 2',3'-cyclic phosphate end + an intron with a 2',3'-cyclic phosphate and a 5'-hydroxyl terminus.. Functionally, constitutes one of the two catalytic subunit of the tRNA-splicing endonuclease complex, a complex responsible for identification and cleavage of the splice sites in pre-tRNA. It cleaves pre-tRNA at the 5'- and 3'-splice sites to release the intron. The products are an intron and two tRNA half-molecules bearing 2',3'-cyclic phosphate and 5'-OH termini. There are no conserved sequences at the splice sites, but the intron is invariably located at the same site in the gene, placing the splice sites an invariant distance from the constant structural features of the tRNA body. Probably carries the active site for 5'-splice site cleavage. The tRNA splicing endonuclease is also involved in mRNA processing via its association with pre-mRNA 3'-end processing factors, establishing a link between pre-tRNA splicing and pre-mRNA 3'-end formation, suggesting that the endonuclease subunits function in multiple RNA-processing events. This chain is tRNA-splicing endonuclease subunit Sen2 (Tsen2), found in Rattus norvegicus (Rat).